The following is a 162-amino-acid chain: Large ribosomal subunit protein uL15 (162 aa).

The interval 1-41 is disordered; sequence MKLSDIADNAGSRKKRMRVGRGIGSGKGKTAGRGGKGQTAR. A compositionally biased stretch (gly residues) spans 21–37; that stretch reads RGIGSGKGKTAGRGGKG.

This sequence belongs to the universal ribosomal protein uL15 family. As to quaternary structure, part of the 50S ribosomal subunit.

Its function is as follows. Binds to the 23S rRNA. This chain is Large ribosomal subunit protein uL15, found in Rhodopseudomonas palustris (strain BisB18).